A 286-amino-acid chain; its full sequence is MAPVGSIVLDGKATRDEIFVDLKQRVAKLTEAGRTPGLGTVLVGDDPGSQAYVRGKHADCAKVGINSIRRDLPADITQAQLDETIDELNANPDCTGYIVQLPLPKHLDENAALERIDPAKDADGLHPTNLGRLVLGKDAPLPCTPRGIVHLLRRFDVPIAGAHVVVIGRGVTVGRPMGLLLTRRSENATVTLCHTGTRDLPALTRQADIIIAAVGVPHMVTADMVKPGAAVVDVGVSRVDGKLTGDVAPDVWEVAGHVSPNPGGVGPLTRAFLLTNVVELEESKLA.

Residues 168-170, T195, and V236 contribute to the NADP(+) site; that span reads GRG.

The protein belongs to the tetrahydrofolate dehydrogenase/cyclohydrolase family. As to quaternary structure, homodimer.

The catalysed reaction is (6R)-5,10-methylene-5,6,7,8-tetrahydrofolate + NADP(+) = (6R)-5,10-methenyltetrahydrofolate + NADPH. It carries out the reaction (6R)-5,10-methenyltetrahydrofolate + H2O = (6R)-10-formyltetrahydrofolate + H(+). The protein operates within one-carbon metabolism; tetrahydrofolate interconversion. Functionally, catalyzes the oxidation of 5,10-methylenetetrahydrofolate to 5,10-methenyltetrahydrofolate and then the hydrolysis of 5,10-methenyltetrahydrofolate to 10-formyltetrahydrofolate. This is Bifunctional protein FolD from Mycolicibacterium fortuitum (Mycobacterium fortuitum).